A 346-amino-acid polypeptide reads, in one-letter code: Sensor histidine kinase GraS (346 aa).

The next 2 helical transmembrane spans lie at 15 to 35 (MNWI…SLID) and 43 to 63 (LFYI…LTYF). The Histidine kinase domain maps to 126–332 (EFVHDIKTPV…TVRLIFPLQN (207 aa)).

Interacts with GraX.

The protein resides in the cell membrane. The enzyme catalyses ATP + protein L-histidine = ADP + protein N-phospho-L-histidine.. In terms of biological role, member of the two-component regulatory system GraR/GraS involved in resistance against cationic antimicrobial peptides (CAMPs). Functions as a sensor protein kinase which phosphorylates GraR through the auxiliary protein GraX. In turn, GraR up-regulates many genes such as adhesins, exoproteins, transporters, toxins, and proteins involved in cell wall synthesis. Down-regulates the expression of many genes involved in RNA and amino acid synthesis or glycolysis. This chain is Sensor histidine kinase GraS (graS), found in Staphylococcus aureus (strain COL).